Consider the following 704-residue polypeptide: Ion-translocating oxidoreductase complex subunit C (704 aa).

4Fe-4S ferredoxin-type domains are found at residues 368–397 (MGAPQEEKSCIRCSACADACPADLLPQQLY) and 407–436 (KATAHHIADCIECGACAWVCPSNIPLVQYF). [4Fe-4S] cluster is bound by residues Cys-377, Cys-380, Cys-383, Cys-387, Cys-416, Cys-419, Cys-422, and Cys-426. The interval 536–684 (RAKQAAHPMA…PADPRKAAVA (149 aa)) is disordered. The segment covering 556-565 (KAAVEAAIAR) has biased composition (low complexity).

Belongs to the 4Fe4S bacterial-type ferredoxin family. RnfC subfamily. The complex is composed of six subunits: RsxA, RsxB, RsxC, RsxD, RsxE and RsxG. [4Fe-4S] cluster is required as a cofactor.

It localises to the cell inner membrane. Functionally, part of a membrane-bound complex that couples electron transfer with translocation of ions across the membrane. Required to maintain the reduced state of SoxR. This Salmonella choleraesuis (strain SC-B67) protein is Ion-translocating oxidoreductase complex subunit C.